Reading from the N-terminus, the 214-residue chain is Rhodanese-like domain-containing protein 10 (214 aa).

One can recognise a Rhodanese domain in the interval 58-182 (ASEGYILLDV…VSEGDFPEIE (125 aa)). Residue Cys-142 is the Cysteine persulfide intermediate of the active site. A helical membrane pass occupies residues 190-206 (ATIGGVSFYLLKLLVLL).

The protein resides in the membrane. The protein is Rhodanese-like domain-containing protein 10 (STR10) of Arabidopsis thaliana (Mouse-ear cress).